A 489-amino-acid chain; its full sequence is Rhamnulokinase (489 aa).

13–17 (ASSGR) provides a ligand contact to ATP. A disulfide bridge links cysteine 68 with cysteine 222. Substrate is bound by residues glycine 83 and 236 to 238 (HDT). The active-site Proton acceptor is aspartate 237. An ATP-binding site is contributed by threonine 259. Position 296 (asparagine 296) interacts with substrate. An ATP-binding site is contributed by glutamine 304. Cysteine 353 and cysteine 370 are oxidised to a cystine. Glycine 402 provides a ligand contact to ATP. Cysteine 413 and cysteine 417 are disulfide-bonded.

This sequence belongs to the rhamnulokinase family. In terms of assembly, monomer. It depends on Mg(2+) as a cofactor.

The enzyme catalyses L-rhamnulose + ATP = L-rhamnulose 1-phosphate + ADP + H(+). The protein operates within carbohydrate degradation; L-rhamnose degradation; glycerone phosphate from L-rhamnose: step 2/3. Its function is as follows. Involved in the catabolism of L-rhamnose (6-deoxy-L-mannose). Catalyzes the transfer of the gamma-phosphate group from ATP to the 1-hydroxyl group of L-rhamnulose to yield L-rhamnulose 1-phosphate. This is Rhamnulokinase from Escherichia fergusonii (strain ATCC 35469 / DSM 13698 / CCUG 18766 / IAM 14443 / JCM 21226 / LMG 7866 / NBRC 102419 / NCTC 12128 / CDC 0568-73).